We begin with the raw amino-acid sequence, 44 residues long: Antibacterial protein 3 (44 aa).

At Met1 the chain carries N-formylmethionine.

Belongs to the staphylococcal hemolytic protein family.

Its subcellular location is the secreted. Has hemolytic activity and also inhibits the growth of gonococci. The chain is Antibacterial protein 3 from Staphylococcus haemolyticus.